We begin with the raw amino-acid sequence, 137 residues long: uncharacterized protein (137 aa).

The next 4 helical transmembrane spans lie at Ala-14–Ser-34, Tyr-48–Ile-68, Phe-84–Thr-104, and His-109–Phe-129.

It is found in the cell membrane. This is an uncharacterized protein from Methanocaldococcus jannaschii (strain ATCC 43067 / DSM 2661 / JAL-1 / JCM 10045 / NBRC 100440) (Methanococcus jannaschii).